The sequence spans 211 residues: Probable nicotinate-nucleotide adenylyltransferase (211 aa).

This sequence belongs to the NadD family.

The catalysed reaction is nicotinate beta-D-ribonucleotide + ATP + H(+) = deamido-NAD(+) + diphosphate. It functions in the pathway cofactor biosynthesis; NAD(+) biosynthesis; deamido-NAD(+) from nicotinate D-ribonucleotide: step 1/1. Its function is as follows. Catalyzes the reversible adenylation of nicotinate mononucleotide (NaMN) to nicotinic acid adenine dinucleotide (NaAD). In Desulfotalea psychrophila (strain LSv54 / DSM 12343), this protein is Probable nicotinate-nucleotide adenylyltransferase.